We begin with the raw amino-acid sequence, 63 residues long: Race-specific elicitor A9 (63 aa).

The N-terminal stretch at 1-23 (MKLSLLSVELALLIATTLPLCWA) is a signal peptide. The propeptide occupies 24–35 (AALPVGLGVGLD). Cystine bridges form between Cys-37-Cys-51, Cys-41-Cys-54, and Cys-47-Cys-61.

Its function is as follows. This necrosis-inducing peptide induces a hypersensitive response on Cf-9 tomato genotypes. Race-specific elicitors are compounds which only induce defense responses in genotypes of host plants which are resistant to the pathogenic race that produces the elicitor, but not in susceptible genotypes. This Passalora fulva (Tomato leaf mold) protein is Race-specific elicitor A9 (AVR9).